We begin with the raw amino-acid sequence, 193 residues long: Cysteine and glycine-rich protein 2 (193 aa).

In terms of domain architecture, LIM zinc-binding 1 spans 10 to 61; that stretch reads CGACGRTVYHAEEVQCDGRSFHRCCFLCMVCRKNLDSTTVAIHDEEIYCKSC. The Nuclear localization signal signature appears at 64–69; sequence KKYGPK. Lys-91 participates in a covalent cross-link: Glycyl lysine isopeptide (Lys-Gly) (interchain with G-Cter in SUMO2). An N6-acetyllysine mark is found at Lys-112 and Lys-131. The LIM zinc-binding 2 domain occupies 119 to 170; sequence CSRCGDSVYAAEKIIGAGKPWHKNCFRCAKCGKSLESTTLTEKEGEIYCKGC. At Lys-137 the chain carries N6-acetyllysine; alternate. Position 137 is an N6-succinyllysine; alternate (Lys-137). An N6-acetyllysine modification is found at Lys-161.

In terms of assembly, interacts with KAT14. The LIM domain 1 is necessary and sufficient for this interaction. Interacts with GLRX3.

It localises to the nucleus. Drastically down-regulated in response to PDGF-BB or cell injury, that promote smooth muscle cell proliferation and dedifferentiation. Seems to play a role in the development of the embryonic vascular system. The chain is Cysteine and glycine-rich protein 2 (CSRP2) from Bos taurus (Bovine).